The chain runs to 151 residues: Large ribosomal subunit protein bL9 (151 aa).

The protein belongs to the bacterial ribosomal protein bL9 family.

In terms of biological role, binds to the 23S rRNA. The sequence is that of Large ribosomal subunit protein bL9 from Francisella tularensis subsp. novicida (strain U112).